A 59-amino-acid chain; its full sequence is MSDGTAAMGKKGRKRVHIRCRRCGRHSFHRRKGYCAACGFGRSKRLRSYNWVRKKKNRT.

Zn(2+) is bound by residues Cys-20, Cys-23, Cys-35, and Cys-38. The C4-type zinc finger occupies 20 to 38; sequence CRRCGRHSFHRRKGYCAAC.

The protein belongs to the eukaryotic ribosomal protein eL37 family. Zn(2+) serves as cofactor.

Binds to the 23S rRNA. This Archaeoglobus fulgidus (strain ATCC 49558 / DSM 4304 / JCM 9628 / NBRC 100126 / VC-16) protein is Large ribosomal subunit protein eL37 (rpl37e).